A 381-amino-acid polypeptide reads, in one-letter code: Peptidoglycan transport system permease protein YejE (381 aa).

5 helical membrane passes run 38-58 (YWSFWLFLILFFLSLIAEFIA), 183-203 (VLFGLTLTIASALVGVTAGAI), 230-250 (ILLIIAAILPPGFFVLLGIML), 292-312 (LLPNAMVATLTFLPFILSGSI), and 347-367 (WLGLTAFFTMSIMLSLLIFVG). An ABC transmembrane type-1 domain is found at 179–371 (FRISVLFGLT…LLIFVGEAVR (193 aa)).

This sequence belongs to the binding-protein-dependent transport system permease family. In terms of assembly, the complex is composed of one ATP-binding protein (YejF), two transmembrane proteins (YejB and YejE) and a solute-binding protein (YepA or YejA).

It is found in the cell inner membrane. Part of the ABC transporter complex YejBEF-YepA involved in the uptake of muropeptides, the breakdown products of cell wall peptidoglycan. The import of muropeptides into the cell enables peptidoglycan recycling, which is vital for cell wall integrity in this bacterium. Is also probably part of the ABC transporter complex YejABEF, which is likely involved in broad-spectrum peptide import. Responsible for the translocation of the substrate across the membrane. This chain is Peptidoglycan transport system permease protein YejE, found in Agrobacterium fabrum (strain C58 / ATCC 33970) (Agrobacterium tumefaciens (strain C58)).